The sequence spans 622 residues: MSTDNKQSLPAITLAAIGVVYGDIGTSPLYTLRECLSGQFGFGLERDAVFGFLSLIFWLLIFVVSIKYLTFVMRADNAGEGGILTLMSLAGRNTSARTTSMLVIMGLIGGSFFYGEVVITPAISVMSAIEGLEIVAPQLDTWIVPLSIIVLTLLFMIQKHGTAMVGKLFAPIMLTWFLILAGLGLRSIIANPEVLHALNPMWAVHFFLEYKTVSFIALGAVVLSITGGEALYADMGHFGKFPIRLAWFTVVLPSLTLNYFGQGALLLKNPEAIKNPFFLLAPDWALIPLLIIAALATVIASQAVISGVFSLTRQAVRLGYLSPMRIIHTSEMESGQIYIPFVNWMLYVAVVIVIVSFEHSSNLAAAYGIAVTGTMVLTSILSTTVARQNWHWNKYFVALILIAFLCVDIPLFTANLDKLLSGGWLPLSLGTVMFIVMTTWKSERFRLLRRMHEHGNSLEAMIASLEKSPPVRVPGTAVYMSRAINVIPFALMHNLKHNKVLHERVILLTLRTEDAPYVHNVRRVQIEQLSPTFWRVVASYGWRETPNVEEVFHRCGLEGLSCRMMETSFFMSHESLILGKRPWYLRLRGKLYLLLQRNALRAPDQFEIPPNRVIELGTQVEI.

12 helical membrane passes run 9–29 (LPAI…TSPL), 49–69 (VFGF…IKYL), 103–123 (VIMG…TPAI), 137–157 (PQLD…LFMI), 165–185 (VGKL…GLGL), 213–233 (VSFI…ALYA), 247–267 (WFTV…ALLL), 276–296 (PFFL…AALA), 337–357 (IYIP…IVSF), 363–383 (LAAA…ILST), 396–416 (FVAL…TANL), and 419–439 (LLSG…VMTT).

The protein belongs to the HAK/KUP transporter (TC 2.A.72) family.

The protein resides in the cell inner membrane. The enzyme catalyses K(+)(in) + H(+)(in) = K(+)(out) + H(+)(out). Functionally, responsible for the low-affinity transport of potassium into the cell. Likely operates as a K(+):H(+) symporter. The chain is Low affinity potassium transport system protein Kup from Shigella flexneri serotype 5b (strain 8401).